A 189-amino-acid chain; its full sequence is dCTP deaminase (189 aa).

DCTP contacts are provided by residues 112-117 (KSTYAR), 136-138 (TLE), Gln-157, Tyr-171, and Gln-181. Glu-138 functions as the Proton donor/acceptor in the catalytic mechanism.

It belongs to the dCTP deaminase family. Homotrimer.

It carries out the reaction dCTP + H2O + H(+) = dUTP + NH4(+). The protein operates within pyrimidine metabolism; dUMP biosynthesis; dUMP from dCTP (dUTP route): step 1/2. Functionally, catalyzes the deamination of dCTP to dUTP. The protein is dCTP deaminase of Paraburkholderia phymatum (strain DSM 17167 / CIP 108236 / LMG 21445 / STM815) (Burkholderia phymatum).